A 279-amino-acid polypeptide reads, in one-letter code: Energy-coupling factor transporter ATP-binding protein EcfA1 (279 aa).

The ABC transporter domain maps to 5–240 (IELKKVTFNY…GDELLQLGLD (236 aa)). 40–47 (GHNGSGKS) serves as a coordination point for ATP.

This sequence belongs to the ABC transporter superfamily. Energy-coupling factor EcfA family. Forms a stable energy-coupling factor (ECF) transporter complex composed of 2 membrane-embedded substrate-binding proteins (S component), 2 ATP-binding proteins (A component) and 2 transmembrane proteins (T component).

It is found in the cell membrane. ATP-binding (A) component of a common energy-coupling factor (ECF) ABC-transporter complex. Unlike classic ABC transporters this ECF transporter provides the energy necessary to transport a number of different substrates. The protein is Energy-coupling factor transporter ATP-binding protein EcfA1 of Streptococcus pyogenes serotype M28 (strain MGAS6180).